Here is a 302-residue protein sequence, read N- to C-terminus: 1,2-dihydroxynaphthalene dioxygenase (302 aa).

2 VOC domains span residues 9–124 and 149–270; these read ELGY…IFWG and GLGH…PGWR. His152 contributes to the Fe cation binding site. Residues His152, 199 to 200, His215, and Tyr256 contribute to the substrate site; that span reads DH. His215 contributes to the Fe cation binding site. Residue Glu266 coordinates Fe cation.

Belongs to the extradiol ring-cleavage dioxygenase family. Requires Fe(2+) as cofactor.

The enzyme catalyses naphthalene-1,2-diol + O2 = 2-hydroxychromene-2-carboxylate + H(+). The protein operates within aromatic compound metabolism; naphthalene degradation. Its activity is regulated as follows. Inhibited by bathophenanthroline sulfonate, o-phenanthroline, 8-hydroxyquinoline, 2,2'-dipyridyl and p-chlormercuribenzoate. Also inhibited by Hg(2+), Cu(2+), Co(2+) and Fe(3+) ions. Involved in the naphthalene catabolic pathway. Catalyzes the meta-cleavage of 1,2-dihydroxynaphthalene (1,2-DHN) to yield 2-hydroxychromene-2-carboxylic acid. Can also cleave 3-methylcatechol and 4-methylcatechol. The sequence is that of 1,2-dihydroxynaphthalene dioxygenase (nahC) from Pseudomonas putida (Arthrobacter siderocapsulatus).